The primary structure comprises 713 residues: Ribosomal RNA large subunit methyltransferase K/L (713 aa).

The THUMP domain occupies Thr-46–Leu-157.

Belongs to the methyltransferase superfamily. RlmKL family.

It is found in the cytoplasm. It catalyses the reaction guanosine(2445) in 23S rRNA + S-adenosyl-L-methionine = N(2)-methylguanosine(2445) in 23S rRNA + S-adenosyl-L-homocysteine + H(+). The enzyme catalyses guanosine(2069) in 23S rRNA + S-adenosyl-L-methionine = N(2)-methylguanosine(2069) in 23S rRNA + S-adenosyl-L-homocysteine + H(+). Functionally, specifically methylates the guanine in position 2445 (m2G2445) and the guanine in position 2069 (m7G2069) of 23S rRNA. The sequence is that of Ribosomal RNA large subunit methyltransferase K/L from Syntrophotalea carbinolica (strain DSM 2380 / NBRC 103641 / GraBd1) (Pelobacter carbinolicus).